Consider the following 220-residue polypeptide: Imidazoleglycerol-phosphate dehydratase (220 aa).

Residues Glu14, 64 to 72 (HMIHALAKH), 90 to 94 (HHTTE), Arg116, and Arg138 each bind substrate. Residues His64, His90, His91, and Glu94 each contribute to the Mn(2+) site. Residues His162, His186, His187, and Glu190 each coordinate Mn(2+). Residues 186 to 194 (HHRSESAFK) and 214 to 216 (STK) contribute to the substrate site.

The protein belongs to the imidazoleglycerol-phosphate dehydratase family. The cofactor is Mn(2+).

It carries out the reaction D-erythro-1-(imidazol-4-yl)glycerol 3-phosphate = 3-(imidazol-4-yl)-2-oxopropyl phosphate + H2O. It functions in the pathway amino-acid biosynthesis; L-histidine biosynthesis; L-histidine from 5-phospho-alpha-D-ribose 1-diphosphate: step 6/9. The sequence is that of Imidazoleglycerol-phosphate dehydratase from Saccharomyces cerevisiae (strain ATCC 204508 / S288c) (Baker's yeast).